The sequence spans 161 residues: Sec-independent protein translocase protein TatB (161 aa).

A helical membrane pass occupies residues 2–22; that stretch reads FNDIGALELVTLVVLAVLVFG. Residues 102-161 are disordered; sequence DAVHGRDAESSSSGSSSGSSSAASGNGRVDMSKKPEKPEKPGKTDKPAADDRPPFDMDAT. Over residues 111-126 the composition is skewed to low complexity; sequence SSSSGSSSGSSSAASG. Positions 131–161 are enriched in basic and acidic residues; sequence DMSKKPEKPEKPGKTDKPAADDRPPFDMDAT.

This sequence belongs to the TatB family. In terms of assembly, the Tat system comprises two distinct complexes: a TatABC complex, containing multiple copies of TatA, TatB and TatC subunits, and a separate TatA complex, containing only TatA subunits. Substrates initially bind to the TatABC complex, which probably triggers association of the separate TatA complex to form the active translocon.

It is found in the cell membrane. Functionally, part of the twin-arginine translocation (Tat) system that transports large folded proteins containing a characteristic twin-arginine motif in their signal peptide across membranes. Together with TatC, TatB is part of a receptor directly interacting with Tat signal peptides. TatB may form an oligomeric binding site that transiently accommodates folded Tat precursor proteins before their translocation. The polypeptide is Sec-independent protein translocase protein TatB (Streptomyces coelicolor (strain ATCC BAA-471 / A3(2) / M145)).